Reading from the N-terminus, the 227-residue chain is YEATS domain-containing protein 4 (227 aa).

Positions 15 to 158 constitute a YEATS domain; that stretch reads RVKGVTIVKP…AMMQQLLTTS (144 aa). A Glycyl lysine isopeptide (Lys-Gly) (interchain with G-Cter in SUMO2) cross-link involves residue Lys37. The diacetylated histone H3 binding stretch occupies residues 93-97; sequence WGEFE. The interaction with MLLT10 stretch occupies residues 163-227; the sequence is LGAYKHETEF…LEEDDQTKDI (65 aa). An interaction with TACC1 region spans residues 168–227; that stretch reads HETEFAELEVKTREKLEAAKKKTSFEIAELKERLKASRETINCLKNEIRKLEEDDQTKDI. A coiled-coil region spans residues 178-226; sequence KTREKLEAAKKKTSFEIAELKERLKASRETINCLKNEIRKLEEDDQTKD.

In terms of assembly, component of numerous complexes with chromatin remodeling and histone acetyltransferase activity. Component of the NuA4 histone acetyltransferase complex which contains the catalytic subunit KAT5/TIP60 and the subunits EP400, TRRAP/PAF400, BRD8/SMAP, EPC1, DMAP1/DNMAP1, RUVBL1/TIP49, RUVBL2, ING3, actin, ACTL6A/BAF53A, MORF4L1/MRG15, MORF4L2/MRGX, MRGBP, YEATS4/GAS41, VPS72/YL1 and MEAF6. The NuA4 complex interacts with MYC and the adenovirus E1A protein. Component of a NuA4-related complex which contains EP400, TRRAP/PAF400, SRCAP, BRD8/SMAP, EPC1, DMAP1/DNMAP1, RUVBL1/TIP49, RUVBL2, actin, ACTL6A/BAF53A, VPS72 and YEATS4/GAS41. Interacts with MLLT10/AF10. Also interacts with the SWI/SNF component SMARCB1/BAF47, TACC1 and TACC2, and the nuclear matrix protein NUMA1.

The protein localises to the nucleus. Functionally, chromatin reader component of the NuA4 histone acetyltransferase (HAT) complex, a complex involved in transcriptional activation of select genes principally by acetylation of nucleosomal histones H4 and H2A. Specifically recognizes and binds acylated histone H3, with a preference for histone H3 diacetylated at 'Lys-18' and 'Lys-27' (H3K18ac and H3K27ac) or histone H3 diacetylated at 'Lys-14' and 'Lys-27' (H3K14ac and H3K27ac). Also able to recognize and bind crotonylated histone H3. May also recognize and bind histone H3 succinylated at 'Lys-122' (H3K122succ); additional evidences are however required to confirm this result in vivo. Plays a key role in histone variant H2AZ1/H2A.Z deposition into specific chromatin regions: recognizes and binds H3K14ac and H3K27ac on the promoters of actively transcribed genes and recruits NuA4-related complex to deposit H2AZ1/H2A.Z. H2AZ1/H2A.Z deposition is required for maintenance of embryonic stem cell. The protein is YEATS domain-containing protein 4 of Mus musculus (Mouse).